The chain runs to 135 residues: Meiotically up-regulated gene 116 protein (135 aa).

Residues 20–39 form a helical membrane-spanning segment; it reads YFHSFHCFFLLCFTVMLCVV. Residues 81-101 are disordered; it reads QTPTKKGNKTKKKRKKEKKKE. The span at 86 to 98 shows a compositional bias: basic residues; sequence KGNKTKKKRKKEK.

It is found in the mitochondrion membrane. Functionally, has a role in meiosis. The chain is Meiotically up-regulated gene 116 protein (mug116) from Schizosaccharomyces pombe (strain 972 / ATCC 24843) (Fission yeast).